The primary structure comprises 348 residues: Ferredoxin--NADP reductase (348 aa).

FAD is bound by residues threonine 25, glutamate 44, glutamine 52, tyrosine 57, valine 97, phenylalanine 132, aspartate 298, and serine 339.

Belongs to the ferredoxin--NADP reductase type 2 family. As to quaternary structure, homodimer. FAD is required as a cofactor.

The catalysed reaction is 2 reduced [2Fe-2S]-[ferredoxin] + NADP(+) + H(+) = 2 oxidized [2Fe-2S]-[ferredoxin] + NADPH. This Chlorobium phaeobacteroides (strain BS1) protein is Ferredoxin--NADP reductase.